The chain runs to 106 residues: Large ribosomal subunit protein uL24 (106 aa).

A compositionally biased stretch (basic and acidic residues) spans 84–97; it reads EKIGRELGAKEKAR. The interval 84–106 is disordered; the sequence is EKIGRELGAKEKARLQKRKAAAK.

Belongs to the universal ribosomal protein uL24 family. In terms of assembly, part of the 50S ribosomal subunit.

In terms of biological role, one of two assembly initiator proteins, it binds directly to the 5'-end of the 23S rRNA, where it nucleates assembly of the 50S subunit. One of the proteins that surrounds the polypeptide exit tunnel on the outside of the subunit. The sequence is that of Large ribosomal subunit protein uL24 from Anaeromyxobacter sp. (strain K).